We begin with the raw amino-acid sequence, 235 residues long: Ribonuclease PH (235 aa).

Phosphate-binding positions include R86 and 124–126 (GTR).

Belongs to the RNase PH family. In terms of assembly, homohexameric ring arranged as a trimer of dimers.

The enzyme catalyses tRNA(n+1) + phosphate = tRNA(n) + a ribonucleoside 5'-diphosphate. Its function is as follows. Phosphorolytic 3'-5' exoribonuclease that plays an important role in tRNA 3'-end maturation. Removes nucleotide residues following the 3'-CCA terminus of tRNAs; can also add nucleotides to the ends of RNA molecules by using nucleoside diphosphates as substrates, but this may not be physiologically important. Probably plays a role in initiation of 16S rRNA degradation (leading to ribosome degradation) during starvation. The protein is Ribonuclease PH of Francisella tularensis subsp. tularensis (strain FSC 198).